Consider the following 219-residue polypeptide: Agamous-like MADS-box protein AGL19 (219 aa).

Positions 1 to 61 constitute an MADS-box domain; sequence MVRGKTEMKR…SKLYEFSSSS (61 aa). The disordered stretch occupies residues 77–96; the sequence is GNNHKRNDNSQQARDETSGL. Residues 86–176 enclose the K-box domain; sequence SQQARDETSG…KEKWLGMGTA (91 aa).

As to quaternary structure, interacts with SOC1 and AGL21. As to expression, mostly expressed in the outer layers of the root meristem (lateral root cap and epidermis) and in the central cylinder cells of mature roots. Also present in rosette leaves and seedlings and, to a lesser extent, in cauline leaves and flowers. Enriched in apices including the shoot apical meristem and developing leaf primordia.

It localises to the nucleus. Functionally, probable transcription factor that promotes flowering, especially in response to vernalization by short periods of cold, in an FLC-inpedendent manner. The chain is Agamous-like MADS-box protein AGL19 (AGL19) from Arabidopsis thaliana (Mouse-ear cress).